A 458-amino-acid polypeptide reads, in one-letter code: tRNA modification GTPase MnmE (458 aa).

(6S)-5-formyl-5,6,7,8-tetrahydrofolate-binding residues include arginine 26, glutamate 88, and arginine 127. Residues 224 to 378 (GLSTAIIGRP…IEDRINQLFF (155 aa)) enclose the TrmE-type G domain. Position 234 (asparagine 234) interacts with K(+). GTP is bound by residues 234–239 (NVGKSS), 253–259 (TDIAGTT), and 278–281 (DTAG). Serine 238 is a binding site for Mg(2+). Residues threonine 253, isoleucine 255, and threonine 258 each coordinate K(+). Threonine 259 is a Mg(2+) binding site. Lysine 458 is a binding site for (6S)-5-formyl-5,6,7,8-tetrahydrofolate.

Belongs to the TRAFAC class TrmE-Era-EngA-EngB-Septin-like GTPase superfamily. TrmE GTPase family. Homodimer. Heterotetramer of two MnmE and two MnmG subunits. It depends on K(+) as a cofactor.

Its subcellular location is the cytoplasm. Functionally, exhibits a very high intrinsic GTPase hydrolysis rate. Involved in the addition of a carboxymethylaminomethyl (cmnm) group at the wobble position (U34) of certain tRNAs, forming tRNA-cmnm(5)s(2)U34. This chain is tRNA modification GTPase MnmE, found in Streptococcus pyogenes serotype M6 (strain ATCC BAA-946 / MGAS10394).